The following is a 336-amino-acid chain: Glyceraldehyde-3-phosphate dehydrogenase, plasmid (336 aa).

NAD(+) contacts are provided by residues 12–13, Asp-37, Arg-81, and Ser-123; that span reads RI. D-glyceraldehyde 3-phosphate is bound by residues 154–156 and Thr-185; that span reads SCT. The Nucleophile role is filled by Cys-155. Residue Asn-186 coordinates NAD(+). D-glyceraldehyde 3-phosphate is bound by residues Arg-200, 213 to 214, and Arg-236; that span reads TG. Asn-317 lines the NAD(+) pocket.

This sequence belongs to the glyceraldehyde-3-phosphate dehydrogenase family. In terms of assembly, homotetramer.

It carries out the reaction D-glyceraldehyde 3-phosphate + phosphate + NAD(+) = (2R)-3-phospho-glyceroyl phosphate + NADH + H(+). It functions in the pathway carbohydrate biosynthesis; Calvin cycle. In terms of biological role, could be involved in carbon fixation as a component of the Calvin cycle. Catalyzes the oxidative phosphorylation of glyceraldehyde 3-phosphate (G3P) to 1,3-bisphosphoglycerate (BPG) using the cofactor NAD. The first reaction step involves the formation of a hemiacetal intermediate between G3P and a cysteine residue, and this hemiacetal intermediate is then oxidized to a thioester, with concomitant reduction of NAD to NADH. The reduced NADH is then exchanged with the second NAD, and the thioester is attacked by a nucleophilic inorganic phosphate to produce BPG. The polypeptide is Glyceraldehyde-3-phosphate dehydrogenase, plasmid (cbbGP) (Cupriavidus necator (strain ATCC 17699 / DSM 428 / KCTC 22496 / NCIMB 10442 / H16 / Stanier 337) (Ralstonia eutropha)).